Here is a 507-residue protein sequence, read N- to C-terminus: Hexokinase-5 (507 aa).

Residues 4-24 (AAAVGTAVVVAAAVGVAVVLA) traverse the membrane as a helical segment. The Hexokinase domain maps to 44–498 (RKVAAVIEDV…SGIGAALLAA (455 aa)). The hexokinase small subdomain stretch occupies residues 99 to 237 (TGNEQGLFYA…GLDMKIAALV (139 aa)). ADP is bound by residues glycine 113, threonine 114, and asparagine 115. Positions 203, 204, 238, and 239 each coordinate D-glucose. The tract at residues 238–487 (NDTVGTLAGG…SSVVTKLAND (250 aa)) is hexokinase large subdomain. Threonine 262 is an ADP binding site. D-glucose-binding residues include asparagine 265, glutamate 293, and glutamate 324. Residue glycine 452 participates in ADP binding.

This sequence belongs to the hexokinase family. As to expression, expressed in roots, leaves, flowers, immature seeds, endosperm and seed coat.

It is found in the plastid. It localises to the chloroplast outer membrane. The catalysed reaction is a D-hexose + ATP = a D-hexose 6-phosphate + ADP + H(+). The enzyme catalyses D-fructose + ATP = D-fructose 6-phosphate + ADP + H(+). It catalyses the reaction D-glucose + ATP = D-glucose 6-phosphate + ADP + H(+). Its pathway is carbohydrate metabolism; hexose metabolism. It functions in the pathway carbohydrate degradation; glycolysis; D-glyceraldehyde 3-phosphate and glycerone phosphate from D-glucose: step 1/4. In terms of biological role, fructose and glucose phosphorylating enzyme. Functions as a glucose sensor for plant growth and photosynthesis. Is essential for pollen development, germination, and tube growth. Its activity is necessary for the starch utilization pathway during pollen germination and tube growth, as well as for starch biosynthesis during pollen maturation. The polypeptide is Hexokinase-5 (HXK5) (Oryza sativa subsp. japonica (Rice)).